Reading from the N-terminus, the 276-residue chain is Large ribosomal subunit protein uL2 (276 aa).

The disordered stretch occupies residues valine 224 to lysine 276. A compositionally biased stretch (basic residues) spans lysine 258–lysine 276.

Belongs to the universal ribosomal protein uL2 family. Part of the 50S ribosomal subunit. Forms a bridge to the 30S subunit in the 70S ribosome.

One of the primary rRNA binding proteins. Required for association of the 30S and 50S subunits to form the 70S ribosome, for tRNA binding and peptide bond formation. It has been suggested to have peptidyltransferase activity; this is somewhat controversial. Makes several contacts with the 16S rRNA in the 70S ribosome. This chain is Large ribosomal subunit protein uL2, found in Geobacillus thermodenitrificans (strain NG80-2).